The primary structure comprises 427 residues: Putative ABC transporter substrate-binding protein YesO (427 aa).

The protein belongs to the bacterial solute-binding protein 1 family.

Its function is as follows. May play a role in the degradation of type I rhamnogalacturonan derived from plant cell walls. This Bacillus subtilis (strain 168) protein is Putative ABC transporter substrate-binding protein YesO (yesO).